We begin with the raw amino-acid sequence, 204 residues long: dITP/XTP pyrophosphatase (204 aa).

8–13 (SRNRKK) provides a ligand contact to substrate. Residue D73 is the Proton acceptor of the active site. D73 serves as a coordination point for Mg(2+). Substrate is bound by residues S74, 155 to 158 (FGYD), K179, and 184 to 185 (HR).

It belongs to the HAM1 NTPase family. In terms of assembly, homodimer. Requires Mg(2+) as cofactor.

The catalysed reaction is XTP + H2O = XMP + diphosphate + H(+). It catalyses the reaction dITP + H2O = dIMP + diphosphate + H(+). It carries out the reaction ITP + H2O = IMP + diphosphate + H(+). Pyrophosphatase that catalyzes the hydrolysis of nucleoside triphosphates to their monophosphate derivatives, with a high preference for the non-canonical purine nucleotides XTP (xanthosine triphosphate), dITP (deoxyinosine triphosphate) and ITP. Seems to function as a house-cleaning enzyme that removes non-canonical purine nucleotides from the nucleotide pool, thus preventing their incorporation into DNA/RNA and avoiding chromosomal lesions. This Mycolicibacterium paratuberculosis (strain ATCC BAA-968 / K-10) (Mycobacterium paratuberculosis) protein is dITP/XTP pyrophosphatase.